A 519-amino-acid polypeptide reads, in one-letter code: Cytochrome P450 monooxygenase AtmP (519 aa).

A helical transmembrane segment spans residues Ser-21 to Val-41. Cys-457 is a binding site for heme.

It belongs to the cytochrome P450 family. Heme serves as cofactor.

It is found in the membrane. Its pathway is secondary metabolite biosynthesis. Functionally, cytochrome P450 monooxygenase; part of the ATM2 gene cluster that mediates the biosynthesis of aflatrem, a tremorgenic mycotoxin with acute neurotoxic effects. Synthesis of geranylgeranyl diphosphate (GGPP) by AtmG (a GGPP synthase) precedes condensation of GGPP with indole 3-glycerol phosphate, followed by epoxidation and cyclization by AtmM (a FAD-dependent monooxygenase) and AtmC (a prenyltransferase) to produce paspaline. AtmB is also essential for paspaline production, but its exact role has not been identified yet. AtmP, a cytochrome P450 monooxygenase, subsequently converts paspaline to 13-desoxypaxilline via PC-M6 by removal of the C-30 methyl group and oxidation at C-10. AtmQ, a cytochrome P450 monooxygenase, then catalyzes the oxidation of 13-desoxypaxilline, first at C-7 to produce paspalicine and then at C-13 to form paspalinine. Finally, AtmD prenylates paspalinine to form aflatrem. This chain is Cytochrome P450 monooxygenase AtmP, found in Aspergillus flavus.